The sequence spans 622 residues: Mitochondrial distribution and morphology protein 34 (622 aa).

Positions 1 to 204 (MSFKVNWNSL…LPTLIHQLSL (204 aa)) constitute an SMP-LTD domain. Disordered stretches follow at residues 364 to 393 (YSNKDAPNKPKRRRIKVHKKSKAKQDDNTV), 442 to 468 (LETMSTGSSSSASSQVIAHPTPKRAYQ), and 572 to 592 (LDGGKNSANTNNSSGGKNFRP). A compositionally biased stretch (basic residues) spans 372-385 (KPKRRRIKVHKKSK). Low complexity predominate over residues 446 to 455 (STGSSSSASS). The segment covering 577–587 (NSANTNNSSGG) has biased composition (polar residues).

It belongs to the MDM34 family. In terms of assembly, component of the ER-mitochondria encounter structure (ERMES) or MDM complex, composed of MMM1, MDM10, MDM12 and MDM34.

It localises to the mitochondrion outer membrane. Functionally, component of the ERMES/MDM complex, which serves as a molecular tether to connect the endoplasmic reticulum (ER) and mitochondria. Components of this complex are involved in the control of mitochondrial shape and protein biogenesis, and function in nonvesicular lipid trafficking between the ER and mitochondria. MDM34 is required for the interaction of the ER-resident membrane protein MMM1 and the outer mitochondrial membrane-resident beta-barrel protein MDM10. The chain is Mitochondrial distribution and morphology protein 34 from Candida albicans (strain WO-1) (Yeast).